We begin with the raw amino-acid sequence, 58 residues long: Galectin-1 (58 aa).

Positions 2 to 58 constitute a Galectin domain; it reads GITXTSLHVAPGARLAVKGDIPAGAKSWVINLGKGENDIMLHFNARFDAHGDIRTIV. Residues 43–47 and H51 contribute to the a beta-D-galactoside site; that span reads HFNAR.

In terms of assembly, monomer. As to expression, detected in most tissues, most abundantly in skin.

Its subcellular location is the secreted. It is found in the extracellular space. The protein localises to the extracellular matrix. In terms of biological role, may regulate cell apoptosis and cell differentiation. Binds beta-galactoside and a wide array of complex carbohydrates. This chain is Galectin-1, found in Podarcis hispanicus (Iberian wall lizard).